Reading from the N-terminus, the 256-residue chain is Omega-amidase YafV (256 aa).

The 231-residue stretch at leucine 4–leucine 234 folds into the CN hydrolase domain. Catalysis depends on glutamate 42, which acts as the Proton acceptor. Residue lysine 107 is part of the active site. Cysteine 141 acts as the Nucleophile in catalysis.

It belongs to the carbon-nitrogen hydrolase superfamily. NIT1/NIT2 family.

It carries out the reaction a monoamide of a dicarboxylate + H2O = a dicarboxylate + NH4(+). In terms of biological role, hydrolyzes alpha-ketoglutaramate (a-KGM) to alpha-ketoglutarate (alpha-KG) and ammonia (specific activity 21 umol/min/mg), has very weak activity on L-glutamine, and no activity on deaminated glutathione (dGSH) or glutathione. May function as a metabolite repair enzyme. The sequence is that of Omega-amidase YafV from Yersinia enterocolitica.